We begin with the raw amino-acid sequence, 306 residues long: N-acetylmuramic acid 6-phosphate etherase (306 aa).

In terms of domain architecture, SIS spans 62–225 (IAQAFQNGGR…TTASMIRIGK (164 aa)). Glutamate 90 serves as the catalytic Proton donor. Residue glutamate 121 is part of the active site.

It belongs to the GCKR-like family. MurNAc-6-P etherase subfamily. In terms of assembly, homodimer.

The catalysed reaction is N-acetyl-D-muramate 6-phosphate + H2O = N-acetyl-D-glucosamine 6-phosphate + (R)-lactate. It participates in amino-sugar metabolism; 1,6-anhydro-N-acetylmuramate degradation. It functions in the pathway amino-sugar metabolism; N-acetylmuramate degradation. Its pathway is cell wall biogenesis; peptidoglycan recycling. Specifically catalyzes the cleavage of the D-lactyl ether substituent of MurNAc 6-phosphate, producing GlcNAc 6-phosphate and D-lactate. Together with AnmK, is also required for the utilization of anhydro-N-acetylmuramic acid (anhMurNAc) either imported from the medium or derived from its own cell wall murein, and thus plays a role in cell wall recycling. This Vibrio atlanticus (strain LGP32) (Vibrio splendidus (strain Mel32)) protein is N-acetylmuramic acid 6-phosphate etherase.